The sequence spans 417 residues: uncharacterized protein (417 aa).

The next 10 membrane-spanning stretches (helical) occupy residues 21-41, 50-70, 88-108, 166-186, 217-237, 255-275, 283-303, 308-328, 351-371, and 373-393; these read ISSL…AFQL, LLMM…GLLA, LTVI…LLSV, SVFY…FFLP, MPLL…LQIG, LAGW…AITG, LLYF…APFL, IAGI…FGLV, AIQS…GVLA, and WIGV…IGLI.

Belongs to the major facilitator superfamily. TCR/Tet family.

It localises to the cell membrane. This is an uncharacterized protein from Bacillus subtilis (strain 168).